A 442-amino-acid polypeptide reads, in one-letter code: uncharacterized protein (442 aa).

Positions 1–23 are cleaved as a signal peptide; that stretch reads MEILLIVLGAVVAGLLCPVQTAA. Disordered stretches follow at residues 36–67 and 91–115; these read TSIS…NSSD and ANET…TNTR. Residues 48–67 show a composition bias toward low complexity; it reads TSSGELSQSTFSSSSTNSSD. Asparagine 64, asparagine 92, asparagine 99, asparagine 130, asparagine 174, asparagine 225, asparagine 244, asparagine 346, asparagine 363, asparagine 386, and asparagine 398 each carry an N-linked (GlcNAc...) asparagine glycan.

It is found in the secreted. This is an uncharacterized protein from Arthroderma benhamiae (strain ATCC MYA-4681 / CBS 112371) (Trichophyton mentagrophytes).